The primary structure comprises 84 residues: UPF0386 protein NGR_c10980 (84 aa).

Belongs to the UPF0386 family.

This is UPF0386 protein NGR_c10980 from Sinorhizobium fredii (strain NBRC 101917 / NGR234).